The chain runs to 296 residues: Ribosomal protein L11 methyltransferase (296 aa).

Residues Thr-139, Gly-163, Asp-185, and Asn-232 each coordinate S-adenosyl-L-methionine.

This sequence belongs to the methyltransferase superfamily. PrmA family.

The protein resides in the cytoplasm. The catalysed reaction is L-lysyl-[protein] + 3 S-adenosyl-L-methionine = N(6),N(6),N(6)-trimethyl-L-lysyl-[protein] + 3 S-adenosyl-L-homocysteine + 3 H(+). Methylates ribosomal protein L11. The chain is Ribosomal protein L11 methyltransferase from Picosynechococcus sp. (strain ATCC 27264 / PCC 7002 / PR-6) (Agmenellum quadruplicatum).